Consider the following 483-residue polypeptide: Dihydrolipoyllysine-residue acetyltransferase component of pyruvate dehydrogenase complex, mitochondrial (483 aa).

The transit peptide at 1-28 directs the protein to the mitochondrion; that stretch reads MLSANMLRRMHHGVAVTRMLLVSNGKVQ. The region spanning 53-129 is the Lipoyl-binding domain; it reads HTVINMPALS…PVGKPLAVTV (77 aa). K94 bears the N6-lipoyllysine mark. Disordered regions lie at residues 143-187 and 234-254; these read IEDS…DRVF and EAAAKATTPAASAADAAAPGD. Basic and acidic residues predominate over residues 146–160; that stretch reads SSAKEPSAKSGEEKS. Over residues 161-178 the composition is skewed to polar residues; sequence APSSEKQSKETSSPSNVS. The 38-residue stretch at 187-224 folds into the Peripheral subunit-binding (PSBD) domain; the sequence is FASPLARKLAEEKDLDLSQIRGSGPNGRIIKVDIENFK. Residues 235–252 are compositionally biased toward low complexity; the sequence is AAAKATTPAASAADAAAP. Catalysis depends on residues H456 and D460.

It belongs to the 2-oxoacid dehydrogenase family. The cofactor is (R)-lipoate.

It is found in the mitochondrion matrix. It catalyses the reaction N(6)-[(R)-dihydrolipoyl]-L-lysyl-[protein] + acetyl-CoA = N(6)-[(R)-S(8)-acetyldihydrolipoyl]-L-lysyl-[protein] + CoA. The pyruvate dehydrogenase complex catalyzes the overall conversion of pyruvate to acetyl-CoA and CO(2). It contains multiple copies of three enzymatic components: pyruvate dehydrogenase (E1), dihydrolipoamide acetyltransferase (E2) and lipoamide dehydrogenase (E3). This chain is Dihydrolipoyllysine-residue acetyltransferase component of pyruvate dehydrogenase complex, mitochondrial, found in Schizosaccharomyces pombe (strain 972 / ATCC 24843) (Fission yeast).